Consider the following 193-residue polypeptide: Thioredoxin M4, chloroplastic (193 aa).

The N-terminal 82 residues, 1 to 82 (MASLLDSVTV…RIACEAQDTT (82 aa)), are a transit peptide targeting the chloroplast. Residues 83 to 192 (AAAVEVPNLS…LEKTIERFLV (110 aa)) enclose the Thioredoxin domain. Residues C116 and C119 each act as nucleophile in the active site. Cysteines 116 and 119 form a disulfide.

The protein belongs to the thioredoxin family. Plant M-type subfamily.

It is found in the plastid. It localises to the chloroplast stroma. Its function is as follows. Thiol-disulfide oxidoreductase involved in the redox regulation of enzyme of the oxidative pentose phosphate pathway. Under reducing conditions, inhibits the glucose-6-phosphate dehydrogenase. This is Thioredoxin M4, chloroplastic from Arabidopsis thaliana (Mouse-ear cress).